Here is a 413-residue protein sequence, read N- to C-terminus: Phosphopentomutase (413 aa).

6 residues coordinate Mn(2+): D11, D306, H311, D347, H348, and H359.

Belongs to the phosphopentomutase family. The cofactor is Mn(2+).

Its subcellular location is the cytoplasm. The catalysed reaction is 2-deoxy-alpha-D-ribose 1-phosphate = 2-deoxy-D-ribose 5-phosphate. It catalyses the reaction alpha-D-ribose 1-phosphate = D-ribose 5-phosphate. It functions in the pathway carbohydrate degradation; 2-deoxy-D-ribose 1-phosphate degradation; D-glyceraldehyde 3-phosphate and acetaldehyde from 2-deoxy-alpha-D-ribose 1-phosphate: step 1/2. Its function is as follows. Isomerase that catalyzes the conversion of deoxy-ribose 1-phosphate (dRib-1-P) and ribose 1-phosphate (Rib-1-P) to deoxy-ribose 5-phosphate (dRib-5-P) and ribose 5-phosphate (Rib-5-P), respectively. This is Phosphopentomutase from Helicobacter pylori (strain J99 / ATCC 700824) (Campylobacter pylori J99).